Reading from the N-terminus, the 225-residue chain is ATP-dependent dethiobiotin synthetase BioD (225 aa).

Residue 12–17 participates in ATP binding; the sequence is EVGKTY. Position 16 (Thr-16) interacts with Mg(2+). Residue Lys-37 is part of the active site. Ser-41 serves as a coordination point for substrate. Residues Asp-52, 114–117, and 174–175 each bind ATP; these read EGAG and NC. Positions 52 and 114 each coordinate Mg(2+).

This sequence belongs to the dethiobiotin synthetase family. In terms of assembly, homodimer. It depends on Mg(2+) as a cofactor.

The protein resides in the cytoplasm. The catalysed reaction is (7R,8S)-7,8-diammoniononanoate + CO2 + ATP = (4R,5S)-dethiobiotin + ADP + phosphate + 3 H(+). The protein operates within cofactor biosynthesis; biotin biosynthesis; biotin from 7,8-diaminononanoate: step 1/2. Catalyzes a mechanistically unusual reaction, the ATP-dependent insertion of CO2 between the N7 and N8 nitrogen atoms of 7,8-diaminopelargonic acid (DAPA, also called 7,8-diammoniononanoate) to form a ureido ring. The sequence is that of ATP-dependent dethiobiotin synthetase BioD from Francisella tularensis subsp. mediasiatica (strain FSC147).